The following is a 508-amino-acid chain: Photosystem II CP47 reaction center protein (508 aa).

Transmembrane regions (helical) follow at residues 21–36 (AVHL…WAGS), 101–115 (IILS…IWHW), 140–156 (GIHL…FGAF), 203–218 (IAAG…FHLS), 237–252 (VLSS…AFVV), and 457–472 (NFAL…HGSR).

It belongs to the PsbB/PsbC family. PsbB subfamily. As to quaternary structure, PSII is composed of 1 copy each of membrane proteins PsbA, PsbB, PsbC, PsbD, PsbE, PsbF, PsbH, PsbI, PsbJ, PsbK, PsbL, PsbM, PsbT, PsbX, PsbY, PsbZ, Psb30/Ycf12, at least 3 peripheral proteins of the oxygen-evolving complex and a large number of cofactors. It forms dimeric complexes. It depends on Binds multiple chlorophylls. PSII binds additional chlorophylls, carotenoids and specific lipids. as a cofactor.

The protein resides in the plastid. It is found in the chloroplast thylakoid membrane. In terms of biological role, one of the components of the core complex of photosystem II (PSII). It binds chlorophyll and helps catalyze the primary light-induced photochemical processes of PSII. PSII is a light-driven water:plastoquinone oxidoreductase, using light energy to abstract electrons from H(2)O, generating O(2) and a proton gradient subsequently used for ATP formation. In Staurastrum punctulatum (Green alga), this protein is Photosystem II CP47 reaction center protein.